A 253-amino-acid chain; its full sequence is 7-carboxy-7-deazaguanine synthase (253 aa).

Substrate is bound by residues 12–14 (WQG) and R32. A Radical SAM core domain is found at 23–253 (AFGRRQIFVR…FQVHKYLNVL (231 aa)). [4Fe-4S] cluster is bound by residues C36, C40, and C43. S45 contributes to the Mg(2+) binding site. Substrate is bound at residue T98. G100 contacts S-adenosyl-L-methionine.

It belongs to the radical SAM superfamily. 7-carboxy-7-deazaguanine synthase family. Homodimer. Requires [4Fe-4S] cluster as cofactor. S-adenosyl-L-methionine serves as cofactor. Mg(2+) is required as a cofactor.

It carries out the reaction 6-carboxy-5,6,7,8-tetrahydropterin + H(+) = 7-carboxy-7-deazaguanine + NH4(+). Its pathway is purine metabolism; 7-cyano-7-deazaguanine biosynthesis. Its function is as follows. Catalyzes the complex heterocyclic radical-mediated conversion of 6-carboxy-5,6,7,8-tetrahydropterin (CPH4) to 7-carboxy-7-deazaguanine (CDG), a step common to the biosynthetic pathways of all 7-deazapurine-containing compounds. This Thermococcus kodakarensis (strain ATCC BAA-918 / JCM 12380 / KOD1) (Pyrococcus kodakaraensis (strain KOD1)) protein is 7-carboxy-7-deazaguanine synthase.